The chain runs to 397 residues: MMIKVGAAINGTDSPKAMKREHDNDDGDRTGRHKRPKTDGFTEAIQQGKFEVRLLVSSKSAGAIIGKGGENIKRLRAEFNAHVQVPDSNTPERVCTVTADEKTVLNILKDVLPRLEDNFSERDPCEVRMLVHQSHAGALIGRNGSKIKELREKCSARLKIFTGCAPGSTDRVLITSGEQKNVLGIIEEVMKELKEIPIKGSATPYLPAFNYDPSNISDYGGFPGNMPAGGPPNNRGPAPQRGGQGPPGGPRSYGGAITQGGGQRSFEAGDFQQFRGGPGPVPGYAMSAPGYPPQQGQFGAPNNAGYGYGPGGGGPVTTAQVTIPSDLGGTIIGRGGERIARIRQESGAQITLEQSNGQPERIITIKGTEQQIHSAQYLLQQCVRNSTQGRERFGGSV.

Residues 1–41 (MMIKVGAAINGTDSPKAMKREHDNDDGDRTGRHKRPKTDGF) are disordered. A compositionally biased stretch (basic and acidic residues) spans 16 to 30 (KAMKREHDNDDGDRT). KH domains are found at residues 49–111 (KFEV…LKDV) and 124–189 (PCEV…IEEV). Residues 220 to 279 (GGFPGNMPAGGPPNNRGPAPQRGGQGPPGGPRSYGGAITQGGGQRSFEAGDFQQFRGGPG) form a disordered region. The segment covering 224–241 (GNMPAGGPPNNRGPAPQR) has biased composition (low complexity). In terms of domain architecture, KH 3 spans 316 to 379 (VTTAQVTIPS…QQIHSAQYLL (64 aa)).

Interacts with alg-1; the interaction is direct and may be strengthened through RNA-protein association. In terms of tissue distribution, expressed in gut, muscle, neuronal and hypodermal tissues. Highly expressed in the germline and oocytes.

Its subcellular location is the nucleus. It is found in the cytoplasm. In terms of biological role, RNA-binding protein which functions together with alg-1, a component of the miRNA loading complex, to modulate the processing and activity of specific miRNAs such as miR-58 and let-7 to regulate gene expression at the post-transcriptional level during embryonic, hypodermal and neuronal development. Promotes the lsy-6-mediated repression of cog-1 in uterine cells. In embryos, may play a role in the DNA damage response. The protein is Heterogeneous nuclear ribonucleoprotein K homolog of Caenorhabditis elegans.